The following is a 314-amino-acid chain: Melanocyte-stimulating hormone receptor (314 aa).

Over 1–35 (MSMLAPLRLVREPWNASEGNQSNATAGAGGAWCQG) the chain is Extracellular. 3 N-linked (GlcNAc...) asparagine glycosylation sites follow: Asn15, Asn20, and Asn23. The helical transmembrane segment at 36-61 (LDIPNELFLTLGLVSLVENLLVVAAI) threads the bilayer. Residues 62 to 70 (LKNRNLHSP) are Cytoplasmic-facing. Residues 71-91 (TYYFICCLAVSDMLVSVSNLA) form a helical membrane-spanning segment. Residues 92 to 116 (KTLFMLLMEHGVLVIRASIVRHMDN) are Extracellular-facing. A helical transmembrane segment spans residues 117–138 (VIDMLICSSVVSSLSFLGVIAV). Topologically, residues 139–161 (DRYITIFYALRYHSIMTLQRAVV) are cytoplasmic. Residues 162-181 (TMASVWLASTVSSTVLITYY) form a helical membrane-spanning segment. The Extracellular portion of the chain corresponds to 182 to 189 (RNNAILLC). The helical transmembrane segment at 190–209 (LIGFFLFMLVLMLVLYIHMF) threads the bilayer. At 210-237 (ALACHHVRSISSQQKQPTIYRTSSLKGA) the chain is on the cytoplasmic side. The helical transmembrane segment at 238 to 263 (VTLTILLGVFFICWGPFFFHLILIVT) threads the bilayer. Topologically, residues 264–276 (CPTNPFCTCFFSY) are extracellular. Residues 277 to 297 (FNLFLILIICNSVVDPLIYAF) form a helical membrane-spanning segment. The Cytoplasmic segment spans residues 298 to 314 (RSQELRRTLREVVLCSW). Cys312 carries S-palmitoyl cysteine lipidation.

It belongs to the G-protein coupled receptor 1 family.

It localises to the cell membrane. Functionally, receptor for MSH (alpha, beta and gamma) and ACTH. The activity of this receptor is mediated by G proteins which activate adenylate cyclase. Mediates melanogenesis via regulation of cAMP signaling in melanocytes. In Gallus gallus (Chicken), this protein is Melanocyte-stimulating hormone receptor (MC1R).